The sequence spans 367 residues: Anhydro-N-acetylmuramic acid kinase (367 aa).

10–17 (GTSLDGVD) contributes to the ATP binding site.

This sequence belongs to the anhydro-N-acetylmuramic acid kinase family.

The catalysed reaction is 1,6-anhydro-N-acetyl-beta-muramate + ATP + H2O = N-acetyl-D-muramate 6-phosphate + ADP + H(+). It participates in amino-sugar metabolism; 1,6-anhydro-N-acetylmuramate degradation. The protein operates within cell wall biogenesis; peptidoglycan recycling. Its function is as follows. Catalyzes the specific phosphorylation of 1,6-anhydro-N-acetylmuramic acid (anhMurNAc) with the simultaneous cleavage of the 1,6-anhydro ring, generating MurNAc-6-P. Is required for the utilization of anhMurNAc either imported from the medium or derived from its own cell wall murein, and thus plays a role in cell wall recycling. The protein is Anhydro-N-acetylmuramic acid kinase of Aliivibrio fischeri (strain ATCC 700601 / ES114) (Vibrio fischeri).